Consider the following 367-residue polypeptide: Phosphoribosylaminoimidazole-succinocarboxamide synthase (367 aa).

This sequence belongs to the SAICAR synthetase family.

The enzyme catalyses 5-amino-1-(5-phospho-D-ribosyl)imidazole-4-carboxylate + L-aspartate + ATP = (2S)-2-[5-amino-1-(5-phospho-beta-D-ribosyl)imidazole-4-carboxamido]succinate + ADP + phosphate + 2 H(+). It functions in the pathway purine metabolism; IMP biosynthesis via de novo pathway; 5-amino-1-(5-phospho-D-ribosyl)imidazole-4-carboxamide from 5-amino-1-(5-phospho-D-ribosyl)imidazole-4-carboxylate: step 1/2. The polypeptide is Phosphoribosylaminoimidazole-succinocarboxamide synthase (Shewanella sp. (strain MR-7)).